We begin with the raw amino-acid sequence, 152 residues long: Interleukin-3 (152 aa).

Residues 1–19 (MSRLPVLLLLQLLVRPGLQ) form the signal peptide. Asparagine 34 and asparagine 89 each carry an N-linked (GlcNAc...) asparagine glycan. Residues cysteine 35 and cysteine 103 are joined by a disulfide bond.

This sequence belongs to the IL-3 family. Interacts with IL3RA. In terms of tissue distribution, activated T-cells, mast cells, natural killer cells.

Its subcellular location is the secreted. In terms of biological role, cytokine secreted predominantly by activated T-lymphocytes as well as mast cells and osteoblastic cells that controls the production and differentiation of hematopoietic progenitor cells into lineage-restricted cells. Also stimulates mature basophils, eosinophils, and monocytes to become functionally activated. In addition, plays an important role in neural cell proliferation and survival. Participates as well in bone homeostasis and inhibits osteoclast differentiation by preventing NF-kappa-B nuclear translocation and activation. Mechanistically, exerts its biological effects through a receptor composed of IL3RA subunit and a signal transducing subunit IL3RB. Receptor stimulation results in the rapid activation of JAK2 kinase activity leading to STAT5-mediated transcriptional program. Alternatively, contributes to cell survival under oxidative stress in non-hematopoietic systems by activating pathways mediated by PI3K/AKT and ERK. The chain is Interleukin-3 from Homo sapiens (Human).